The primary structure comprises 357 residues: Nicotinate-nucleotide--dimethylbenzimidazole phosphoribosyltransferase (357 aa).

Catalysis depends on Glu-323, which acts as the Proton acceptor.

The protein belongs to the CobT family.

It carries out the reaction 5,6-dimethylbenzimidazole + nicotinate beta-D-ribonucleotide = alpha-ribazole 5'-phosphate + nicotinate + H(+). Its pathway is nucleoside biosynthesis; alpha-ribazole biosynthesis; alpha-ribazole from 5,6-dimethylbenzimidazole: step 1/2. Functionally, catalyzes the synthesis of alpha-ribazole-5'-phosphate from nicotinate mononucleotide (NAMN) and 5,6-dimethylbenzimidazole (DMB). The sequence is that of Nicotinate-nucleotide--dimethylbenzimidazole phosphoribosyltransferase from Nitratidesulfovibrio vulgaris (strain DP4) (Desulfovibrio vulgaris).